Reading from the N-terminus, the 141-residue chain is Alpha-lactalbumin (141 aa).

A signal peptide spans 1–19 (MMSFVSLLVVGILFPAIQA). The C-type lysozyme domain maps to 20-141 (KQFTKCELSQ…KLDQWLCEKM (122 aa)). Disulfide bonds link Cys-25-Cys-138, Cys-47-Cys-129, Cys-80-Cys-95, and Cys-91-Cys-109. Ca(2+) contacts are provided by Lys-97, Asp-100, Asp-102, Asp-105, and Asp-106.

This sequence belongs to the glycosyl hydrolase 22 family. Lactose synthase (LS) is a heterodimer of a catalytic component, beta1,4-galactosyltransferase (beta4Gal-T1) and a regulatory component, alpha-lactalbumin (LA). Mammary gland specific. Secreted in milk.

It is found in the secreted. Functionally, regulatory subunit of lactose synthase, changes the substrate specificity of galactosyltransferase in the mammary gland making glucose a good acceptor substrate for this enzyme. This enables LS to synthesize lactose, the major carbohydrate component of milk. In other tissues, galactosyltransferase transfers galactose onto the N-acetylglucosamine of the oligosaccharide chains in glycoproteins. This Sus scrofa (Pig) protein is Alpha-lactalbumin (LALBA).